A 257-amino-acid chain; its full sequence is Probable enoyl-CoA hydratase echA17 (257 aa).

Belongs to the enoyl-CoA hydratase/isomerase family.

It carries out the reaction a (3S)-3-hydroxyacyl-CoA = a (2E)-enoyl-CoA + H2O. It catalyses the reaction a 4-saturated-(3S)-3-hydroxyacyl-CoA = a (3E)-enoyl-CoA + H2O. In terms of biological role, could possibly oxidize fatty acids using specific components. This Mycobacterium avium (strain 104) protein is Probable enoyl-CoA hydratase echA17 (echA17).